The following is a 155-amino-acid chain: MVEFTHISDGRAQMVDISAKPDVVREAVAQGRIYLRPATLAAIREGSVVKGNVLATARVAATLAVKDTPRIIPMCHTIPLGAVTVDFTEGDGYIEATVVTKSTGKTGVEMEALTGVSVALLTIWDMVKSAEKDENGQYPVTCIEGIRVVEKKKGQ.

Residues 74–76 (MCH) and 110–111 (ME) contribute to the substrate site. Asp125 is a catalytic residue.

The protein belongs to the MoaC family. Homohexamer; trimer of dimers.

It carries out the reaction (8S)-3',8-cyclo-7,8-dihydroguanosine 5'-triphosphate = cyclic pyranopterin phosphate + diphosphate. The protein operates within cofactor biosynthesis; molybdopterin biosynthesis. In terms of biological role, catalyzes the conversion of (8S)-3',8-cyclo-7,8-dihydroguanosine 5'-triphosphate to cyclic pyranopterin monophosphate (cPMP). This chain is Probable cyclic pyranopterin monophosphate synthase, found in Methanoregula boonei (strain DSM 21154 / JCM 14090 / 6A8).